Reading from the N-terminus, the 582-residue chain is Zinc finger protein somi-1 (582 aa).

Disordered regions lie at residues 179 to 251 and 352 to 377; these read LRPE…NNTD and SAEPMKRHRVEAHEKQSPKKKVKKEQ. Positions 188–226 are enriched in polar residues; the sequence is TQKSTNGVHRSTSNSSAETLRNNSVSAATVSPSDDNSLN. Positions 227–244 are enriched in low complexity; the sequence is SPALTSSGSAGSGTPPLG. Over residues 352-368 the composition is skewed to basic and acidic residues; it reads SAEPMKRHRVEAHEKQS. A C2H2-type; Degenerate zinc finger spans residues 454-477; the sequence is YICEDCDFVTVYKGNMKRHLNTCH. Residues 513 to 582 are disordered; that stretch reads AHKANSSRGR…PPPPPPPMLL (70 aa). Residues 551–570 show a composition bias toward low complexity; that stretch reads LLESLASSSSSMGGYSNGNN. The segment covering 572–582 has biased composition (pro residues); sequence QPPPPPPPMLL.

May interact with swsn-9; the interaction promotes hypodermal differentiation. Expressed in hypodermal seam cells, the somatic gonad and vulval precursor cells, body wall muscle and head neurons.

The protein localises to the nucleus. Functionally, DNA-binding protein which binds to the promoters of let-60, lin-14 and lin-28, possibly to regulate genes involved in hypodermal and vulval development. Together with miRNAs mir-84 and let-7 may direct terminal differentiation of the seam cells, exit from the molting cycle, and vulva formation. Does not regulate the expression of mir-84. May promote hypodermal differentiation in association with swsn-9, a component of SWI/SNF chromatin remodeling complexes. This Caenorhabditis elegans protein is Zinc finger protein somi-1.